The chain runs to 232 residues: Ornithine carbamoyltransferase (232 aa).

Carbamoyl phosphate contacts are provided by residues Gln15, Arg39, and 66–69 (HPTQ). Residues Asn99, Asp163, and 167–168 (SM) contribute to the L-ornithine site. Carbamoyl phosphate is bound by residues 204–207 (HCLP) and Thr232.

The protein belongs to the aspartate/ornithine carbamoyltransferase superfamily. OTCase family.

The protein resides in the cytoplasm. The catalysed reaction is carbamoyl phosphate + L-ornithine = L-citrulline + phosphate + H(+). It functions in the pathway amino-acid biosynthesis; L-arginine biosynthesis; L-arginine from L-ornithine and carbamoyl phosphate: step 1/3. Reversibly catalyzes the transfer of the carbamoyl group from carbamoyl phosphate (CP) to the N(epsilon) atom of ornithine (ORN) to produce L-citrulline. This is Ornithine carbamoyltransferase (argF) from Neisseria subflava.